The following is a 188-amino-acid chain: Abscisic acid receptor PYL8 (188 aa).

Positions 25-176 are START-like; that stretch reads HELVDNQCSS…NLKSLADISE (152 aa). Cysteines 32 and 157 form a disulfide. Residue lysine 61 participates in abscisate binding. Threonine 77 carries the phosphothreonine; by CARK1 modification. Residues 85 to 89 carry the Gate loop motif; the sequence is SGLPA. Abscisate is bound by residues 89–94, 116–122, and glutamate 141; these read ATRSTE and RLKNYSS. A Latch loop motif is present at residues 115 to 117; it reads HRL.

It belongs to the PYR/PYL/RCAR abscisic acid intracellular receptor family. As to quaternary structure, monomer. Homodimer. Binds ABA on one subunit only. interacts with ABI1 and HAB1, and possibly with other PP2Cs. Binds to CARs protein in an ABA-independent manner, both at the plasma membrane and in the nucleus. Interacts directly with CAR1 and CAR4. Interacts with MYB44, MYB73 and MYB77 in an ABA-independent manner. Interacts with DDA1. Interacts with CARK1 in the cytosol. Binds to ABI1 when phosphorylated by CARK1. Interacts with AIP1 in the nucleus. Post-translationally, phosphorylated by CARK1 especially in response to abscisic acid (ABA); this phosphorylation promotes its stability and inhibitory ability to ABI1. In terms of processing, ubiquitinated in DDA1- and CDD complex-dependent manner. Ubiquitination leads to its subsequent proteasomal degradation.

The protein resides in the cytoplasm. It is found in the cytosol. Its subcellular location is the nucleus. It localises to the cell membrane. Receptor for abscisic acid (ABA) required for ABA-mediated responses such as stomatal closure and germination inhibition. Inhibits the activity of group-A protein phosphatases type 2C (PP2Cs) in an ABA-independent manner but more efficiently when activated by ABA. Confers enhanced sensitivity to ABA. Can be activated by both (-)-ABA and (+)-ABA. Mediates crosstalk between ABA and auxin signaling to regulate lateral root growth. Required for lateral root growth suppression by ABA. In response to auxin, promotes lateral root growth by enhancing MYB77-dependent transcription of the auxin-responsive gene IAA19. Enhances the abilities of MYB44 and MYB73 to activate IAA19 gene. In Arabidopsis thaliana (Mouse-ear cress), this protein is Abscisic acid receptor PYL8.